Consider the following 684-residue polypeptide: MASGLTANKKLRHKITAAALLVTLGVVYGDIGTSPLYVMKSIVAGNGGMGHFDTDFLVGSVSLIFWTLLIITTVKYVLIALRADNNGEGGIFALYTLVRQRARWLVLPAMVGGAALLADGMLTPAVTVTTAIEGLKGVHINGNILIDNQQQVIWVTVLIITFLFFIQRFGTDLIGKAFGPIMFVWFTFLGVAGFIALSKDWSMLRALNPYYALHLLVSPDNKMGLFILGSIFLATTGAEALYSDMGHVGRGNIYLSWPYVNICLVLNYFGQAVWLDQNSKVTAFNKITDFNPFFQMLPESIRLGAIILATLAAIIASQALISGSYTLVSEAIKLRFLPRLHIIYPTRLKGQLYIPVVNTILWLACLAIIGYFKTSAEMEGAYGLAITITMLMTTLLLYQYLRSRHAPAVVAIGTLIFFSAIETVFFISSAVKFLHGGYVTAMIAFIILAVMYVWQYGGRIRDDNTYRAEMASLFAYKNQLSELRNDPDYPTYTTNLVYMTQIANDHYIKKEILYSILDKRPKRARVYWFVTVNVTDEPYTAEYTTDTYGTDYMVNVQLYLGFRMEQQVNVFLRQIVNDMMREGELPTQPQKYTTIPDRQVGDWTFVLLHEELSPQTQIKGFQKAIIQARLRLQHIAVSPAQWFGLEYADTIDETVPLVLGKIPITKLNRLTRSQAEAQPEDEDD.

Helical transmembrane passes span 19–39 (ALLV…LYVM), 61–81 (VSLI…LIAL), 104–124 (WLVL…MLTP), 151–171 (QVIW…RFGT), 177–197 (AFGP…FIAL), 223–243 (MGLF…ALYS), 255–275 (LSWP…AVWL), 303–323 (LGAI…LISG), 352–372 (LYIP…IGYF), 381–401 (AYGL…YQYL), 407–427 (PAVV…VFFI), and 433–453 (FLHG…VMYV).

It belongs to the HAK/KUP transporter (TC 2.A.72) family.

The protein resides in the cell membrane. It catalyses the reaction K(+)(in) + H(+)(in) = K(+)(out) + H(+)(out). Functionally, transport of potassium into the cell. Likely operates as a K(+):H(+) symporter. The protein is Probable potassium transport system protein Kup of Lacticaseibacillus paracasei (strain ATCC 334 / BCRC 17002 / CCUG 31169 / CIP 107868 / KCTC 3260 / NRRL B-441) (Lactobacillus paracasei).